A 673-amino-acid chain; its full sequence is Leucine zipper putative tumor suppressor 3 (673 aa).

Disordered regions lie at residues 1–157 (MAKL…CSEP), 172–239 (FHSM…QHLA), and 251–317 (IGTA…PPSP). The segment covering 79 to 92 (SRERPGRYPSEDKG) has biased composition (basic and acidic residues). The span at 173 to 186 (HSMQNLCPPQTNGT) shows a compositional bias: polar residues. The segment covering 215 to 235 (GLSDSGRNSLTSLPTYSSSYS) has biased composition (low complexity). Gly residues predominate over residues 258-269 (SGSGGSSGGGSG). Positions 274–294 (GTSDSGRASSKSGSSSSMGRP) are enriched in low complexity. Positions 295-307 (GHLGSGEGGGGGL) are enriched in gly residues. Phosphoserine occurs at positions 316 and 318. Coiled-coil stretches lie at residues 317–496 (PSAL…SLRD) and 571–639 (RALR…RLRE). Residues 635-673 (RRLRERGAAGGASTPTPQHGEEKKAWTPSRLERIESTEI) are disordered. A compositionally biased stretch (basic and acidic residues) spans 653–673 (HGEEKKAWTPSRLERIESTEI).

It belongs to the LZTS3 family. As to quaternary structure, interacts (via C-terminus) with SHANK3 (via PDZ domain). Interacts (via coiled coil) with SIPA1L1. Can form homooligomers.

Its subcellular location is the synapse. It is found in the postsynaptic density. The protein localises to the cell projection. It localises to the dendritic spine. The protein resides in the dendrite. Its subcellular location is the cytoplasm. It is found in the cytoskeleton. Its function is as follows. May be involved in promoting the maturation of dendritic spines, probably via regulating SIPA1L1 levels at the postsynaptic density of synapses. In Homo sapiens (Human), this protein is Leucine zipper putative tumor suppressor 3.